A 72-amino-acid polypeptide reads, in one-letter code: Gas vesicle protein A (72 aa).

The protein belongs to the gas vesicle GvpA family. As to quaternary structure, the gas vesicle shell is 2 nm thick and consists of a single layer of this protein. It forms helical ribs nearly perpendicular to the long axis of the vesicle.

Its subcellular location is the gas vesicle shell. Its function is as follows. Gas vesicles are hollow, gas filled proteinaceous nanostructures found in some microorganisms. During planktonic growth they allow positioning of the organism at a favorable depth for light or nutrient acquisition. GvpA forms the protein shell. This is Gas vesicle protein A from Haloquadratum walsbyi (strain DSM 16790 / HBSQ001).